The following is a 714-amino-acid chain: WD repeat and coiled-coil-containing protein (714 aa).

WD repeat units lie at residues 55–98 and 154–194; these read GQFE…LEQN and KGSG…LVPC. Disordered regions lie at residues 432–454 and 531–564; these read EESTTKSESPSQHHGIRRHSENF and QASRDSSRPCSPRYETSEKLYSDATPPKNSKEKN. Residues 567–595 are a coiled coil; sequence QLTQNMERIFTRFAEVQQCLSEIREFTQN. The interval 685–714 is disordered; that stretch reads RSARRKSPARPPSGADDFPPESPKSPSMEK.

The sequence is that of WD repeat and coiled-coil-containing protein (wdcp) from Danio rerio (Zebrafish).